We begin with the raw amino-acid sequence, 95 residues long: Mitochondrial import inner membrane translocase subunit Tim13 (95 aa).

M1 carries the N-acetylmethionine modification. A Phosphoserine modification is found at S7. A Twin CX3C motif motif is present at residues 46 to 69; the sequence is CFRKCIGKPGGSLDNSEQKCIAMC. Disulfide bonds link C46-C69 and C50-C65. K53 is subject to N6-succinyllysine.

Belongs to the small Tim family. Heterohexamer; composed of 3 copies of TIMM8 (TIMM8A or TIMM8B) and 3 copies of TIMM13, named soluble 70 kDa complex. Associates with the TIM22 complex, whose core is composed of TIMM22. Ubiquitous, with highest expression in heart, kidney, liver and skeletal muscle.

Its subcellular location is the mitochondrion inner membrane. In terms of biological role, mitochondrial intermembrane chaperone that participates in the import and insertion of some multi-pass transmembrane proteins into the mitochondrial inner membrane. Also required for the transfer of beta-barrel precursors from the TOM complex to the sorting and assembly machinery (SAM complex) of the outer membrane. Acts as a chaperone-like protein that protects the hydrophobic precursors from aggregation and guide them through the mitochondrial intermembrane space. The TIMM8-TIMM13 complex mediates the import of proteins such as TIMM23, SLC25A12/ARALAR1 and SLC25A13/ARALAR2, while the predominant TIMM9-TIMM10 70 kDa complex mediates the import of much more proteins. In Homo sapiens (Human), this protein is Mitochondrial import inner membrane translocase subunit Tim13 (TIMM13).